The following is an 86-amino-acid chain: Serine protease inhibitor Kazal-type 9 (86 aa).

The first 19 residues, 1–19 (MRATAIVLLLALTLATMFS), serve as a signal peptide directing secretion. Residues 26 to 86 (TKQMVDCSHY…TLKFVHFGKC (61 aa)) form the Kazal-like domain. Disulfide bonds link Cys-32–Cys-68, Cys-46–Cys-65, and Cys-54–Cys-86.

Dimer. Interacts with KLK5 and KLK8. In terms of tissue distribution, skin. Highly expressed at sites of hyperkeratosis. Also detected in thymus, tonsils, testis, pancreas, liver, placenta and brain. Expressed at stratum granulosum and stratum corneum at palmar and plantar sites (at protein level).

It localises to the secreted. In terms of biological role, serine protease inhibitor which specifically inhibits KLK5. May contribute to the regulation of the desquamation process in skin by inhibiting KLK5. This chain is Serine protease inhibitor Kazal-type 9 (SPINK9), found in Homo sapiens (Human).